The sequence spans 244 residues: MNGPADGEVDYKKKYRNLKRKLKFLIYEHECFQEELRKAQRKLLKVSRDKSFLLDRLLQYENVDEDSSDSDATASSDNSETEGTPKLSDTPAPKRKRSPPLGGAPSPSSLSLPPSTGFPLQASRAPSPYLSSLASPTYPPFPSDYLALQLPEPSPLRPKREKRPRLPRKLKMAVGPPDCPVGGPLTFPGRGSGAGVGAALAPLPPPKMPPPTILSAVPRQMFSDAGSGDDALDGDDDLVIDIPE.

Residues 10–54 adopt a coiled-coil conformation; the sequence is DYKKKYRNLKRKLKFLIYEHECFQEELRKAQRKLLKVSRDKSFLL. Disordered stretches follow at residues 59–187 and 222–244; these read QYEN…PLTF and FSDA…DIPE. 2 stretches are compositionally biased toward low complexity: residues 99–115 and 122–136; these read PPLG…LPPS and ASRA…LASP. The segment covering 157–171 has biased composition (basic residues); sequence RPKREKRPRLPRKLK. Residues Lys159 and Lys171 each participate in a glycyl lysine isopeptide (Lys-Gly) (interchain with G-Cter in SUMO2) cross-link. A compositionally biased stretch (acidic residues) spans 230–244; the sequence is DALDGDDDLVIDIPE.

Component of the chromatin remodeling INO80 complex; specifically part of a complex module associated with the N-terminus of INO80.

The protein resides in the nucleus. Putative regulatory component of the chromatin remodeling INO80 complex which is involved in transcriptional regulation, DNA replication and probably DNA repair. This chain is INO80 complex subunit E (INO80E), found in Bos taurus (Bovine).